The chain runs to 613 residues: Dihydroxy-acid dehydratase (613 aa).

Residue aspartate 81 participates in Mg(2+) binding. [2Fe-2S] cluster is bound at residue cysteine 122. Mg(2+) contacts are provided by aspartate 123 and lysine 124. An N6-carboxylysine modification is found at lysine 124. [2Fe-2S] cluster is bound at residue cysteine 195. Position 491 (glutamate 491) interacts with Mg(2+). Serine 517 acts as the Proton acceptor in catalysis.

Belongs to the IlvD/Edd family. As to quaternary structure, homodimer. It depends on [2Fe-2S] cluster as a cofactor. Requires Mg(2+) as cofactor.

It catalyses the reaction (2R)-2,3-dihydroxy-3-methylbutanoate = 3-methyl-2-oxobutanoate + H2O. The catalysed reaction is (2R,3R)-2,3-dihydroxy-3-methylpentanoate = (S)-3-methyl-2-oxopentanoate + H2O. It functions in the pathway amino-acid biosynthesis; L-isoleucine biosynthesis; L-isoleucine from 2-oxobutanoate: step 3/4. It participates in amino-acid biosynthesis; L-valine biosynthesis; L-valine from pyruvate: step 3/4. Functions in the biosynthesis of branched-chain amino acids. Catalyzes the dehydration of (2R,3R)-2,3-dihydroxy-3-methylpentanoate (2,3-dihydroxy-3-methylvalerate) into 2-oxo-3-methylpentanoate (2-oxo-3-methylvalerate) and of (2R)-2,3-dihydroxy-3-methylbutanoate (2,3-dihydroxyisovalerate) into 2-oxo-3-methylbutanoate (2-oxoisovalerate), the penultimate precursor to L-isoleucine and L-valine, respectively. This chain is Dihydroxy-acid dehydratase, found in Vibrio atlanticus (strain LGP32) (Vibrio splendidus (strain Mel32)).